Reading from the N-terminus, the 601-residue chain is Adenine deaminase (601 aa).

Belongs to the metallo-dependent hydrolases superfamily. Adenine deaminase family. Requires Mn(2+) as cofactor.

It catalyses the reaction adenine + H2O + H(+) = hypoxanthine + NH4(+). This Ruegeria sp. (strain TM1040) (Silicibacter sp.) protein is Adenine deaminase.